We begin with the raw amino-acid sequence, 88 residues long: UPF0223 protein RBAM_014500 (88 aa).

This sequence belongs to the UPF0223 family.

This Bacillus velezensis (strain DSM 23117 / BGSC 10A6 / LMG 26770 / FZB42) (Bacillus amyloliquefaciens subsp. plantarum) protein is UPF0223 protein RBAM_014500.